The following is a 230-amino-acid chain: Potassium/proton antiporter CemA (230 aa).

The next 4 membrane-spanning stretches (helical) occupy residues 7–27 (LPSF…SFSF), 106–126 (IILH…SFFL), 145–165 (LNDS…VGFH), and 181–201 (LGWA…PVIL).

It belongs to the CemA family.

Its subcellular location is the plastid. The protein resides in the chloroplast inner membrane. It carries out the reaction K(+)(in) + H(+)(out) = K(+)(out) + H(+)(in). Functionally, contributes to K(+)/H(+) antiport activity by supporting proton efflux to control proton extrusion and homeostasis in chloroplasts in a light-dependent manner to modulate photosynthesis. Prevents excessive induction of non-photochemical quenching (NPQ) under continuous-light conditions. Indirectly promotes efficient inorganic carbon uptake into chloroplasts. This chain is Potassium/proton antiporter CemA, found in Zea mays (Maize).